Here is a 261-residue protein sequence, read N- to C-terminus: tRNA pseudouridine synthase A (261 aa).

Asp51 serves as the catalytic Nucleophile. Tyr109 provides a ligand contact to substrate.

Belongs to the tRNA pseudouridine synthase TruA family. As to quaternary structure, homodimer.

It catalyses the reaction uridine(38/39/40) in tRNA = pseudouridine(38/39/40) in tRNA. In terms of biological role, formation of pseudouridine at positions 38, 39 and 40 in the anticodon stem and loop of transfer RNAs. In Shewanella amazonensis (strain ATCC BAA-1098 / SB2B), this protein is tRNA pseudouridine synthase A.